The primary structure comprises 326 residues: Probable cell division protein WhiA (326 aa).

Residues 275–308 (SLDELGRLADPPMTKDAIAGRIRRLLAMADKRAL) constitute a DNA-binding region (H-T-H motif).

The protein belongs to the WhiA family.

In terms of biological role, involved in cell division and chromosome segregation. This chain is Probable cell division protein WhiA, found in Arthrobacter sp. (strain FB24).